The sequence spans 135 residues: Large ribosomal subunit protein mL41B (135 aa).

A mitochondrion-targeting transit peptide spans 1 to 13 (MGLITKIARGLVR).

It belongs to the mitochondrion-specific ribosomal protein mL41 family. As to quaternary structure, component of the mitochondrial ribosome large subunit (39S) which comprises a 16S rRNA and about 50 distinct proteins.

The protein resides in the mitochondrion. Component of the mitochondrial ribosome large subunit. Also involved in apoptosis and cell cycle. This Xenopus laevis (African clawed frog) protein is Large ribosomal subunit protein mL41B (mrpl41-b).